The primary structure comprises 155 residues: Small ribosomal subunit protein uS7 (155 aa).

This sequence belongs to the universal ribosomal protein uS7 family. As to quaternary structure, part of the 30S ribosomal subunit. Contacts proteins S9 and S11.

Functionally, one of the primary rRNA binding proteins, it binds directly to 16S rRNA where it nucleates assembly of the head domain of the 30S subunit. Is located at the subunit interface close to the decoding center, probably blocks exit of the E-site tRNA. This chain is Small ribosomal subunit protein uS7, found in Kosmotoga olearia (strain ATCC BAA-1733 / DSM 21960 / TBF 19.5.1).